The chain runs to 175 residues: Protein-export protein SecB (175 aa).

Belongs to the SecB family. In terms of assembly, homotetramer, a dimer of dimers. One homotetramer interacts with 1 SecA dimer.

It is found in the cytoplasm. In terms of biological role, one of the proteins required for the normal export of preproteins out of the cell cytoplasm. It is a molecular chaperone that binds to a subset of precursor proteins, maintaining them in a translocation-competent state. It also specifically binds to its receptor SecA. The protein is Protein-export protein SecB of Ehrlichia chaffeensis (strain ATCC CRL-10679 / Arkansas).